We begin with the raw amino-acid sequence, 500 residues long: MLKRRLEFFFLYMMLIGAYVIWFFPVSRLEFYGGLLCYISIILFSIYSLILENRTSQHTLLWIHILVFFPIVGYVFYLFSGQLYVKGKLFKTKRMYNREKLRKLFDKEETPEVTGLKDNQERFFTYSIRAAHMNINTKSNIKVLKNGEETFPDIFKAMRKAESYIHIEYYMFKSDMLGRGMMDIMMEKARQGVEVRFLYDAAGSMKLARRDIMRMKQAGVDIVPFSPLKYGFFNQKLNFRNHRKIVIIDGKTGFVGGLNVGKEYISRDPYIGFWRDTHLRLEGEIVQTLHAIFMLDWEYVSNEVLIDQEEYNTPVPVEGGGIYQIVATGPDMKESMSDLYYEMISSAQKSIWIATPYFVPNESIRTALKAAATKGVEVRVMVPEKNDSFLTQYASRSYFPELLLEGIEVYSYQKGFMHQKVMIIDGDLASVGTANMDMRSFQLNFEVNVFFTDAEAIRTLEAHFEEDMQESEKLSPVGFYKRGVADRTKESFARLFSGVL.

3 consecutive transmembrane segments (helical) span residues 6–26 (LEFF…FFPV), 31–51 (FYGG…SLIL), and 59–79 (TLLW…FYLF). 2 PLD phosphodiesterase domains span residues 237–264 (LNFR…GKEY) and 413–440 (QKGF…DMRS). Residues H242, K244, D249, H418, K420, and D425 contribute to the active site.

It belongs to the phospholipase D family. Cardiolipin synthase subfamily.

It is found in the cell membrane. The enzyme catalyses 2 a 1,2-diacyl-sn-glycero-3-phospho-(1'-sn-glycerol) = a cardiolipin + glycerol. Catalyzes the reversible phosphatidyl group transfer from one phosphatidylglycerol molecule to another to form cardiolipin (CL) (diphosphatidylglycerol) and glycerol. May have a role in the heat shock response since the level of the transcript of ywiE increases after a heat shock. This Bacillus subtilis (strain 168) protein is Probable cardiolipin synthase YwiE (ywiE).